The following is a 235-amino-acid chain: uncharacterized protein (235 aa).

The protein to B.subtilis YncM.

This is an uncharacterized protein from Bacillus subtilis (strain 168).